We begin with the raw amino-acid sequence, 103 residues long: Large ribosomal subunit protein uL24 (103 aa).

Belongs to the universal ribosomal protein uL24 family. In terms of assembly, part of the 50S ribosomal subunit.

Functionally, one of two assembly initiator proteins, it binds directly to the 5'-end of the 23S rRNA, where it nucleates assembly of the 50S subunit. One of the proteins that surrounds the polypeptide exit tunnel on the outside of the subunit. This chain is Large ribosomal subunit protein uL24, found in Corynebacterium urealyticum (strain ATCC 43042 / DSM 7109).